The chain runs to 218 residues: Cytochrome b6 (218 aa).

Residues 35-55 form a helical membrane-spanning segment; it reads IFYCLGGITLVCFLIQFATGF. Cysteine 38 is a binding site for heme c. Residues histidine 89 and histidine 103 each coordinate heme b. 3 consecutive transmembrane segments (helical) span residues 93 to 113, 119 to 139, and 189 to 209; these read ASMMVLMLILHVFRVYLTGGF, LTWVTGVVMAVITVAFGVTGY, and LHTFVLPWSLAVFMLMHFLMI. Heme b is bound by residues histidine 190 and histidine 205.

It belongs to the cytochrome b family. PetB subfamily. The 4 large subunits of the cytochrome b6-f complex are cytochrome b6, subunit IV (17 kDa polypeptide, PetD), cytochrome f and the Rieske protein, while the 4 small subunits are PetG, PetL, PetM and PetN. The complex functions as a dimer. The cofactor is heme b. It depends on heme c as a cofactor.

Its subcellular location is the cellular thylakoid membrane. In terms of biological role, component of the cytochrome b6-f complex, which mediates electron transfer between photosystem II (PSII) and photosystem I (PSI), cyclic electron flow around PSI, and state transitions. This is Cytochrome b6 from Prochlorococcus marinus (strain MIT 9215).